We begin with the raw amino-acid sequence, 304 residues long: Small glutamine-rich tetratricopeptide repeat-containing protein beta (304 aa).

TPR repeat units lie at residues 15-49 (LREQ…SPED), 85-118 (ADQL…DPNN), 120-152 (VYYC…DSKY), and 153-186 (SKAY…DPEN). The residue at position 131 (Lys131) is an N6-acetyllysine. A phosphoserine mark is found at Ser293, Ser295, and Ser297.

This sequence belongs to the SGT family. As to quaternary structure, homooligomerize. In terms of tissue distribution, expressed specifically in brain.

Functionally, co-chaperone that binds directly to HSC70 and HSP70 and regulates their ATPase activity. The sequence is that of Small glutamine-rich tetratricopeptide repeat-containing protein beta (Sgtb) from Rattus norvegicus (Rat).